The chain runs to 608 residues: MSQRIAILPEIITNKIAAGEVVERPASVIKELIENSLDAGATDISVEIAAGGRRLIRITDNGHGMSREDALLSLERHATSKIRSDNDLDGIHTLGFRGEALPSVASVSRLRLSSRETDSPEGTEIIVEGGKVRDVRACGMAPGTVISVEQIFFNTPARLKFLRSAETEAGHVGDCLTRMAISRPDVAFSCSSDGRDLLRVQRGDLLRRLSQALGKGTAASLHELHLSRDGIDISGYISSPAACRSTTSAMFTYINGRFIRDKVIQHAIMQAYRGVMDRGRYPVVALFIQLPPAEVDVNVHPTKHEVRFRRQSLVHDTLQSALEELLKRSPWLPRPQTPVQPAAVGAPSISQAYRERVAAAAQASLAMARKPDPPRFHETARPQPDPRHTPGTESVSVREAPTPFLPREPAADPQGYFSALRIIGQFHDEYILCQSGDQLVIIDQHAASERVAFQKLRHQFDTDGVESQRLLFPETLELSFSEADTARRFGNELARIGFELEPFGGNTVIVSAIPRLAIARDASGLIRDLLAELTQLGASSAFLDSRDALLSRIACHSVVRGVHRLEERQIRELLHGMDGTDFAASCPHGRPVSHVITLGELERIFKRT.

The disordered stretch occupies residues 363-397 (ASLAMARKPDPPRFHETARPQPDPRHTPGTESVSV). Basic and acidic residues predominate over residues 369 to 390 (RKPDPPRFHETARPQPDPRHTP).

Belongs to the DNA mismatch repair MutL/HexB family.

This protein is involved in the repair of mismatches in DNA. It is required for dam-dependent methyl-directed DNA mismatch repair. May act as a 'molecular matchmaker', a protein that promotes the formation of a stable complex between two or more DNA-binding proteins in an ATP-dependent manner without itself being part of a final effector complex. This Pelobacter propionicus (strain DSM 2379 / NBRC 103807 / OttBd1) protein is DNA mismatch repair protein MutL.